The chain runs to 157 residues: Nuclear cap-binding protein subunit 2 (157 aa).

MRNA contacts are provided by residues Tyr-17, Tyr-40, 109-113, 120-124, and 130-131; these read RADWD, RQYGR, and QV. In terms of domain architecture, RRM spans 37–115; it reads CTLYVGNLSY…RVIRADWDAG (79 aa).

This sequence belongs to the RRM NCBP2 family. In terms of assembly, component of the nuclear cap-binding complex (CBC), a heterodimer composed of ncbp-1 and ncbp-2 that interacts with m7GpppG-capped RNA.

It localises to the nucleus. Its function is as follows. Component of the cap-binding complex (CBC), which binds co-transcriptionally to the 5' cap of pre-mRNAs and is involved in various processes such as pre-mRNA splicing and RNA-mediated gene silencing (RNAi). The CBC complex is involved in miRNA-mediated RNA interference and is required for primary microRNAs (miRNAs) processing. In the CBC complex, ncbp-2 recognizes and binds capped RNAs (m7GpppG-capped RNA) but requires ncbp-1 to stabilize the movement of its N-terminal loop and lock the CBC into a high affinity cap-binding state with the cap structure. The polypeptide is Nuclear cap-binding protein subunit 2 (ncbp-2) (Caenorhabditis briggsae).